Consider the following 400-residue polypeptide: Tyrosine--tRNA ligase 2 (400 aa).

The short motif at 46–55 (PSAPDIHLGH) is the 'HIGH' region element. The short motif at 230-234 (KMSKS) is the 'KMSKS' region element. Position 233 (Lys-233) interacts with ATP. An S4 RNA-binding domain is found at 339–399 (NNLIEAIVKI…GKKKIVKLLV (61 aa)).

The protein belongs to the class-I aminoacyl-tRNA synthetase family. TyrS type 2 subfamily. In terms of assembly, homodimer.

The protein localises to the cytoplasm. The catalysed reaction is tRNA(Tyr) + L-tyrosine + ATP = L-tyrosyl-tRNA(Tyr) + AMP + diphosphate + H(+). Catalyzes the attachment of tyrosine to tRNA(Tyr) in a two-step reaction: tyrosine is first activated by ATP to form Tyr-AMP and then transferred to the acceptor end of tRNA(Tyr). The polypeptide is Tyrosine--tRNA ligase 2 (Clostridium acetobutylicum (strain ATCC 824 / DSM 792 / JCM 1419 / IAM 19013 / LMG 5710 / NBRC 13948 / NRRL B-527 / VKM B-1787 / 2291 / W)).